A 427-amino-acid polypeptide reads, in one-letter code: Anaerobic glycerol-3-phosphate dehydrogenase subunit B (427 aa).

The protein belongs to the anaerobic G-3-P dehydrogenase subunit B family. Composed of a catalytic GlpA/B dimer and of membrane bound GlpC. Requires FMN as cofactor.

It carries out the reaction a quinone + sn-glycerol 3-phosphate = dihydroxyacetone phosphate + a quinol. It participates in polyol metabolism; glycerol degradation via glycerol kinase pathway; glycerone phosphate from sn-glycerol 3-phosphate (anaerobic route): step 1/1. In terms of biological role, conversion of glycerol 3-phosphate to dihydroxyacetone. Uses fumarate or nitrate as electron acceptor. The chain is Anaerobic glycerol-3-phosphate dehydrogenase subunit B from Glaesserella parasuis serovar 5 (strain SH0165) (Haemophilus parasuis).